A 480-amino-acid polypeptide reads, in one-letter code: Ribulose bisphosphate carboxylase large chain (480 aa).

The propeptide occupies 1 to 2; it reads MS. An N-acetylproline modification is found at Pro3. Lys14 carries the post-translational modification N6,N6,N6-trimethyllysine. Positions 123 and 173 each coordinate substrate. The active-site Proton acceptor is Lys175. Lys177 is a substrate binding site. The Mg(2+) site is built by Lys201, Asp203, and Glu204. Lys201 carries the post-translational modification N6-carboxylysine. The active-site Proton acceptor is His294. Residues Arg295, His327, and Ser379 each contribute to the substrate site.

The protein belongs to the RuBisCO large chain family. Type I subfamily. As to quaternary structure, heterohexadecamer of 8 large chains and 8 small chains; disulfide-linked. The disulfide link is formed within the large subunit homodimers. Mg(2+) serves as cofactor. Post-translationally, the disulfide bond which can form in the large chain dimeric partners within the hexadecamer appears to be associated with oxidative stress and protein turnover.

The protein resides in the plastid. The protein localises to the chloroplast. It carries out the reaction 2 (2R)-3-phosphoglycerate + 2 H(+) = D-ribulose 1,5-bisphosphate + CO2 + H2O. The catalysed reaction is D-ribulose 1,5-bisphosphate + O2 = 2-phosphoglycolate + (2R)-3-phosphoglycerate + 2 H(+). In terms of biological role, ruBisCO catalyzes two reactions: the carboxylation of D-ribulose 1,5-bisphosphate, the primary event in carbon dioxide fixation, as well as the oxidative fragmentation of the pentose substrate in the photorespiration process. Both reactions occur simultaneously and in competition at the same active site. The protein is Ribulose bisphosphate carboxylase large chain of Basella alba (Malabar spinach).